The chain runs to 372 residues: MTSIEPTHTGKKVIVGMSGGVDSSVSAYLLMQQGYQVEGLFMKNWEEDDNNEYCAAAEDLKDAQAVCDKLGIKLHTVNFAAEYWDNVFEYFLAEYKAGRTPNPDIMCNKEIKFKAFLEFADEILDADYIAMGHYVRRRDNSDGSTQMLRGVDGNKDQSYFLYTLSHEQVARSLFPVGELEKHEVREIAKEMGLITHDKKDSTGICFIGERKFTEFLGTYLPAQPGNIETPEGEVIGTHQGLMYHTLGQRKGLGIGGMKNSNDDPWYVVDKDLERNVLIVGQGGHHPRLMSTGMTVNQLHWVDRTGPVDGCHIAVKTRYRQQDVPCTLTYTDEHTLRVVFDEPVAAVTPGQSAVFYDGEVCLGGGIIDQLIRG.

ATP contacts are provided by residues Gly-16–Ser-23 and Met-42. Positions Asn-102–Asp-104 are interaction with target base in tRNA. Cys-107 acts as the Nucleophile in catalysis. A disulfide bridge connects residues Cys-107 and Cys-205. An ATP-binding site is contributed by Gly-132. The segment at Lys-155–Gln-157 is interaction with tRNA. The active-site Cysteine persulfide intermediate is the Cys-205. Residues Arg-317–Tyr-318 form an interaction with tRNA region.

It belongs to the MnmA/TRMU family.

It is found in the cytoplasm. The catalysed reaction is S-sulfanyl-L-cysteinyl-[protein] + uridine(34) in tRNA + AH2 + ATP = 2-thiouridine(34) in tRNA + L-cysteinyl-[protein] + A + AMP + diphosphate + H(+). Functionally, catalyzes the 2-thiolation of uridine at the wobble position (U34) of tRNA, leading to the formation of s(2)U34. The sequence is that of tRNA-specific 2-thiouridylase MnmA from Shewanella baltica (strain OS185).